The chain runs to 364 residues: Alanine racemase (364 aa).

Lysine 34 serves as the catalytic Proton acceptor; specific for D-alanine. Lysine 34 carries the post-translational modification N6-(pyridoxal phosphate)lysine. Arginine 129 contacts substrate. Tyrosine 259 functions as the Proton acceptor; specific for L-alanine in the catalytic mechanism. Methionine 307 provides a ligand contact to substrate.

Belongs to the alanine racemase family. Pyridoxal 5'-phosphate is required as a cofactor.

The catalysed reaction is L-alanine = D-alanine. It participates in amino-acid biosynthesis; D-alanine biosynthesis; D-alanine from L-alanine: step 1/1. Catalyzes the interconversion of L-alanine and D-alanine. May also act on other amino acids. The polypeptide is Alanine racemase (alr) (Coxiella burnetii (strain RSA 331 / Henzerling II)).